Here is a 477-residue protein sequence, read N- to C-terminus: MKTWLLALYDVLSRYKNVWNETWKIRKQLDSPVREKDENEFLPAHLELIETPVSNAPRFVSYSIMLFLTLAIIVSIFSNVEIIATASGKFALSGRSKEIKPIENSLVKHIFVKEGEYVKKGELLLKLTALGAEADTLKTKTSLSQAKLEEFRYKSLLEAVEKDQLPILDFSKIDLPFMTENDQKRVTLLIEEQFSTWQKQRHQKTLNLNKKEAEKLSYLARIKKYEGLINTEQVRLDDFRALYKEHAIAKHTVLDEENKYQDAINELEVYKASLMQVENEVLLAKEEQELVTQLFKNDILDKLKQATDNVNLLTFELDKNNQRQQVSEIRAPVSGTVQQLKVHTIDGVVTTAETLMVVVPEEDSLEVTALIQNKDIGFVKEGQEVVIKVEAFPYTRYGYLTGKVKNITLDAIEHPKLGLVFNTIIELDKKTLSTEEKEIPLSAGMEITAEIKTGMRSVISYLLSPLEESIDKSLRER.

Residues 64–84 (IMLFLTLAIIVSIFSNVEIIA) traverse the membrane as a helical segment. Residues 206–287 (LNLNKKEAEK…ENEVLLAKEE (82 aa)) are a coiled coil.

It belongs to the membrane fusion protein (MFP) (TC 8.A.1) family. As to quaternary structure, probably part of a complex composed of LtxB, LtxD and TdeA, which forms a single transport channel across the two membranes.

It localises to the cell inner membrane. Involved in the export of the LtxA leukotoxin. The polypeptide is Leukotoxin export protein LtxD (Aggregatibacter actinomycetemcomitans (Actinobacillus actinomycetemcomitans)).